Here is a 600-residue protein sequence, read N- to C-terminus: Protein GPR107 (600 aa).

Residues 1–39 (MAALAPVGSPASRGPRLAAGLRLLPMLGLLQLLAEPGLG) form the signal peptide. Over 40-263 (RVHHLALKDD…YLSAGEIPLP (224 aa)) the chain is Extracellular. Asparagine 70 and asparagine 169 each carry an N-linked (GlcNAc...) asparagine glycan. Cysteine 109 and cysteine 228 are disulfide-bonded. A compositionally biased stretch (polar residues) spans 157–175 (SQEPNVNPASAGNQTQKTQ). The disordered stretch occupies residues 157–185 (SQEPNVNPASAGNQTQKTQDGGKSKRSTV). The span at 176-185 (DGGKSKRSTV) shows a compositional bias: basic and acidic residues. The N-linked (GlcNAc...) asparagine glycan is linked to asparagine 211. The chain crosses the membrane as a helical span at residues 264 to 284 (KLYISMAFFFFLSGTIWIHIL). Topologically, residues 285–293 (RKRRNDVFK) are cytoplasmic. A helical transmembrane segment spans residues 294–314 (IHWLMAALPFTKSLSLVFHAI). Over 315-337 (DYHYISSQGFPIEGWAVVYYITH) the chain is Extracellular. The helical transmembrane segment at 338–358 (LLKGALLFITIALIGTGWAFI) threads the bilayer. Over 359 to 368 (KHILSDKDKK) the chain is Cytoplasmic. Residues 369-389 (IFMIVIPLQVLANVAYIIIES) form a helical membrane-spanning segment. Residues 390-402 (TEEGTTEYGLWKD) are Extracellular-facing. The helical transmembrane segment at 403–423 (SLFLVDLLCCGAILFPVVWSI) threads the bilayer. Residues 424 to 498 (RHLQEASATD…AKLKLFRHYY (75 aa)) lie on the Cytoplasmic side of the membrane. Residues 499–519 (VLIVCYIYFTRIIAFLLKLAV) form a helical membrane-spanning segment. Over 520–524 (PFQWK) the chain is Extracellular. Residues 525–544 (WLYQLLDETATLVFFVLTGY) traverse the membrane as a helical segment. Topologically, residues 545-600 (KFRPASDNPYLQLSQEEEDLEMESVVTTSGVMESMKKVKKVTNGSVEPQGEWEGAV) are cytoplasmic.

This sequence belongs to the LU7TM family. Cleaved by FURIN to yield two fragments of 17 and 35 kDa that remain associated via a disulfide bond.

The protein resides in the cell membrane. It localises to the golgi apparatus. The protein localises to the trans-Golgi network membrane. Its function is as follows. Has been proposed to act as a receptor for neuronostatin, a peptide derived from the somatostatin/SST precursor. Involved in blood sugar regulation through the induction of glucagon in response to low glucose. (Microbial infection) Required for intoxication by Pseudomonas aeruginosa exotoxin A and Campylobacter jejuni CDT. May contribute to the retrograde transport of bacterial toxins, including cholera toxin, from the trans-Golgi network to the endoplasmic reticulum. This Homo sapiens (Human) protein is Protein GPR107 (GPR107).